The chain runs to 369 residues: Peptide chain release factor 2 (369 aa).

Glutamine 251 carries the post-translational modification N5-methylglutamine.

Belongs to the prokaryotic/mitochondrial release factor family. Post-translationally, methylated by PrmC. Methylation increases the termination efficiency of RF2.

The protein resides in the cytoplasm. Its function is as follows. Peptide chain release factor 2 directs the termination of translation in response to the peptide chain termination codons UGA and UAA. This is Peptide chain release factor 2 (prfB) from Chlamydia pneumoniae (Chlamydophila pneumoniae).